The chain runs to 116 residues: Large ribosomal subunit protein bL19 (116 aa).

This sequence belongs to the bacterial ribosomal protein bL19 family.

Functionally, this protein is located at the 30S-50S ribosomal subunit interface and may play a role in the structure and function of the aminoacyl-tRNA binding site. The chain is Large ribosomal subunit protein bL19 from Histophilus somni (strain 129Pt) (Haemophilus somnus).